The chain runs to 139 residues: Small ribosomal subunit protein uS12 (139 aa).

The tract at residues Arg12–Pro55 is disordered. Positions Gly27 to Gln42 are enriched in polar residues. Asp102 is subject to 3-methylthioaspartic acid. Residues Gly119–Lys139 form a disordered region. Residues Tyr130–Lys139 show a composition bias toward basic residues.

It belongs to the universal ribosomal protein uS12 family. Part of the 30S ribosomal subunit. Contacts proteins S8 and S17. May interact with IF1 in the 30S initiation complex.

Functionally, with S4 and S5 plays an important role in translational accuracy. In terms of biological role, interacts with and stabilizes bases of the 16S rRNA that are involved in tRNA selection in the A site and with the mRNA backbone. Located at the interface of the 30S and 50S subunits, it traverses the body of the 30S subunit contacting proteins on the other side and probably holding the rRNA structure together. The combined cluster of proteins S8, S12 and S17 appears to hold together the shoulder and platform of the 30S subunit. This Shouchella clausii (strain KSM-K16) (Alkalihalobacillus clausii) protein is Small ribosomal subunit protein uS12.